The following is an 829-amino-acid chain: Potassium voltage-gated channel unc-103 (829 aa).

The interval 1–76 is disordered; that stretch reads MKTAVFGRDS…PRASHSSRRT (76 aa). Residues 1-123 are Cytoplasmic-facing; it reads MKTAVFGRDS…YSPFKAVWDW (123 aa). Over residues 46–66 the composition is skewed to gly residues; that stretch reads GVSGTGGGGSGGLQGAPGAGG. The chain crosses the membrane as a helical span at residues 124–144; it reads IILLLVIYTAVFTPYVAAFLL. Topologically, residues 145–158 are extracellular; sequence RELQDTAKKSRFTE. A helical membrane pass occupies residues 159–179; it reads PLEIVDLIVDIMFIVDIIINF. At 180 to 203 the chain is on the cytoplasmic side; that stretch reads RTTYVNENDEACQVVSDPGKIATH. A helical transmembrane segment spans residues 204-224; that stretch reads YFKGWFIIDMVAAVPFDLLLV. Over 225–234 the chain is Extracellular; that stretch reads STNSDETTTL. Residues 235-255 traverse the membrane as a helical; Voltage-sensor segment; that stretch reads IGLLKTARLLRLVRVARKLDR. At 256-261 the chain is on the cytoplasmic side; that stretch reads YSEYGA. Residues 262–282 form a helical membrane-spanning segment; the sequence is AVLLLLMATFALIAHWLACIW. Residues 283-327 lie on the Extracellular side of the membrane; it reads YAIGSAELSHKEYTWLHQLSKQLAQPYTSTNGTIPTGGPTLKSRY. Asn313 carries N-linked (GlcNAc...) asparagine glycosylation. The pore-forming intramembrane region spans 328–348; sequence VTSLYFTLSTITSIGFGNVSA. Residues 349–354 are Extracellular-facing; that stretch reads TTDSEK. A helical transmembrane segment spans residues 355-375; it reads IFTIIMMILGSLMYASVFGNV. Residues 376–829 lie on the Cytoplasmic side of the membrane; sequence SAIIQRLYSG…TPTQETDTIL (454 aa). Residue 458-559 coordinates a nucleoside 3',5'-cyclic phosphate; sequence AFAGSTPGCL…ILRDDLLDVL (102 aa). The segment at 601 to 674 is disordered; the sequence is SMNKDRYTTP…PLLRRSTNHH (74 aa). Over residues 603 to 615 the composition is skewed to basic and acidic residues; sequence NKDRYTTPPDGDH. Low complexity predominate over residues 640-650; the sequence is SAGSRSSSRCS.

This sequence belongs to the potassium channel family. H (Eag) (TC 1.A.1.20) subfamily. Kv11.1/KCNH2 sub-subfamily. As to quaternary structure, the potassium channel is composed of a homo- or heterotetrameric complex. Interacts with dnj-1; dnj-1 chaperone promotes tetramerization.

The protein localises to the cell membrane. Functionally, pore-forming (alpha) subunit of voltage-gated inwardly rectifying potassium channel. Channel properties are modulated by cAMP and subunit assembly. Regulates the movements of the male's copulatory spicules before and during male mating behavior. The protein is Potassium voltage-gated channel unc-103 of Caenorhabditis elegans.